The primary structure comprises 113 residues: UPF0251 protein Teth514_1147 (113 aa).

Belongs to the UPF0251 family.

This is UPF0251 protein Teth514_1147 from Thermoanaerobacter sp. (strain X514).